Here is a 448-residue protein sequence, read N- to C-terminus: Divalent metal cation transporter MntH (448 aa).

Transmembrane regions (helical) follow at residues 41–61, 69–89, 117–137, 147–167, 176–196, 215–235, 270–290, 307–327, 363–383, 384–404, and 424–444; these read LFAFMGPGALIAVGYVDPGNW, SEFGYTLLSVILISNILAVLL, GFVLWILAELAIIATDIAEVI, FGIPLIWGVCITALDIFLVLF, IEVIVITLMVTILVCFGAEMV, IVTNPAMLYIALGILGATVMP, FSLTIALLINASILILAAAAF, LLNPTLGSSIASTVFAVALLA, VLAIVPAVIITALYGANGINE, LLIFSQVILSMQLSFAVIPLV, and IVSWSVAIFIAFLNIYLLFYT.

It belongs to the NRAMP family.

Its subcellular location is the cell membrane. H(+)-stimulated, divalent metal cation uptake system. This chain is Divalent metal cation transporter MntH, found in Listeria innocua serovar 6a (strain ATCC BAA-680 / CLIP 11262).